A 65-amino-acid polypeptide reads, in one-letter code: Disintegrin CC8B (65 aa).

The Disintegrin domain occupies 1 to 65 (NSAHPCCDPV…DCPRNPWHKS (65 aa)). 4 disulfides stabilise this stretch: Cys-6–Cys-29, Cys-20–Cys-26, Cys-25–Cys-50, and Cys-38–Cys-57. The Cell attachment site; atypical (WGD) motif lies at 42-44 (WGD).

It belongs to the disintegrin family. Dimeric disintegrin subfamily. In terms of assembly, heterodimer with CC8A; disulfide-linked. Expressed by the venom gland.

It is found in the secreted. Inhibits integrins alpha-IIb/beta-3 (ITGA2B/ITGB3), alpha-V/beta-3 (ITGAV/ITGB3), and alpha-5/beta-1 (ITGA5/ITGB1). The chain is Disintegrin CC8B from Cerastes cerastes (Horned desert viper).